We begin with the raw amino-acid sequence, 384 residues long: PqqA peptide cyclase (384 aa).

The region spanning 5–220 (VGLPLWLLAE…TNEYREKLKA (216 aa)) is the Radical SAM core domain. [4Fe-4S] cluster is bound by residues C19, C23, and C26.

This sequence belongs to the radical SAM superfamily. PqqE family. In terms of assembly, interacts with PqqD. The interaction is necessary for activity of PqqE. Requires [4Fe-4S] cluster as cofactor.

The catalysed reaction is [PQQ precursor protein] + S-adenosyl-L-methionine = E-Y cross-linked-[PQQ precursor protein] + 5'-deoxyadenosine + L-methionine + H(+). The protein operates within cofactor biosynthesis; pyrroloquinoline quinone biosynthesis. In terms of biological role, catalyzes the cross-linking of a glutamate residue and a tyrosine residue in the PqqA protein as part of the biosynthesis of pyrroloquinoline quinone (PQQ). The protein is PqqA peptide cyclase of Acinetobacter baumannii (strain AB0057).